Consider the following 310-residue polypeptide: Ribonuclease HIII (310 aa).

The RNase H type-2 domain maps to 90-306 (FQCIGSDEAG…RKKAENLVQK (217 aa)). A divalent metal cation-binding residues include Asp96, Glu97, and Asp201.

Belongs to the RNase HII family. RnhC subfamily. The cofactor is Mn(2+). Requires Mg(2+) as cofactor.

The protein localises to the cytoplasm. It carries out the reaction Endonucleolytic cleavage to 5'-phosphomonoester.. Endonuclease that specifically degrades the RNA of RNA-DNA hybrids. The sequence is that of Ribonuclease HIII from Staphylococcus saprophyticus subsp. saprophyticus (strain ATCC 15305 / DSM 20229 / NCIMB 8711 / NCTC 7292 / S-41).